A 193-amino-acid polypeptide reads, in one-letter code: ATP synthase subunit b (193 aa).

Residues 24-44 (PLAELIVGLLAFGLLVGFFFW) form a helical membrane-spanning segment.

Belongs to the ATPase B chain family. F-type ATPases have 2 components, F(1) - the catalytic core - and F(0) - the membrane proton channel. F(1) has five subunits: alpha(3), beta(3), gamma(1), delta(1), epsilon(1). F(0) has three main subunits: a(1), b(2) and c(10-14). The alpha and beta chains form an alternating ring which encloses part of the gamma chain. F(1) is attached to F(0) by a central stalk formed by the gamma and epsilon chains, while a peripheral stalk is formed by the delta and b chains.

The protein localises to the cell membrane. Functionally, f(1)F(0) ATP synthase produces ATP from ADP in the presence of a proton or sodium gradient. F-type ATPases consist of two structural domains, F(1) containing the extramembraneous catalytic core and F(0) containing the membrane proton channel, linked together by a central stalk and a peripheral stalk. During catalysis, ATP synthesis in the catalytic domain of F(1) is coupled via a rotary mechanism of the central stalk subunits to proton translocation. Component of the F(0) channel, it forms part of the peripheral stalk, linking F(1) to F(0). The chain is ATP synthase subunit b from Parafrankia sp. (strain EAN1pec).